We begin with the raw amino-acid sequence, 374 residues long: Putative F-box protein At3g17480 (374 aa).

In terms of domain architecture, F-box spans 6 to 52 (SSPMSVLTEDLVEDILSRVPATSLVRLRSTCKQWNAILNDRRFIKKH).

This is Putative F-box protein At3g17480 from Arabidopsis thaliana (Mouse-ear cress).